Here is a 307-residue protein sequence, read N- to C-terminus: Pantothenate kinase (307 aa).

90–97 (GSVAVGKS) contributes to the ATP binding site.

Belongs to the prokaryotic pantothenate kinase family.

It is found in the cytoplasm. It catalyses the reaction (R)-pantothenate + ATP = (R)-4'-phosphopantothenate + ADP + H(+). It functions in the pathway cofactor biosynthesis; coenzyme A biosynthesis; CoA from (R)-pantothenate: step 1/5. In Enterococcus faecalis (strain ATCC 700802 / V583), this protein is Pantothenate kinase.